A 145-amino-acid polypeptide reads, in one-letter code: MKLNTKYHGLLEYDEKNIVVFRKGIPGFEHLKKFILVPAEENNLFYILHSIEDENIGIIVASPFDILKDYEFELNEDKTAELKIENMEDIFIVNTVTLNSVLENITINLKAPIVINIKENIGEQLILDKVEYPIKYPLFKGEVSC.

This sequence belongs to the FliW family. Interacts with translational regulator CsrA and flagellin(s).

It is found in the cytoplasm. Its function is as follows. Acts as an anti-CsrA protein, binds CsrA and prevents it from repressing translation of its target genes, one of which is flagellin. Binds to flagellin and participates in the assembly of the flagellum. The sequence is that of Flagellar assembly factor FliW from Clostridium kluyveri (strain NBRC 12016).